A 252-amino-acid chain; its full sequence is Phosphate import ATP-binding protein PstB (252 aa).

Residues 6 to 247 enclose the ABC transporter domain; sequence ITINNLNFYY…PRDKRTEDYI (242 aa). 38–45 contacts ATP; it reads GPSGCGKS.

It belongs to the ABC transporter superfamily. Phosphate importer (TC 3.A.1.7) family. As to quaternary structure, the complex is composed of two ATP-binding proteins (PstB), two transmembrane proteins (PstC and PstA) and a solute-binding protein (PstS).

It is found in the cell membrane. It carries out the reaction phosphate(out) + ATP + H2O = ADP + 2 phosphate(in) + H(+). Functionally, part of the ABC transporter complex PstSACB involved in phosphate import. Responsible for energy coupling to the transport system. The chain is Phosphate import ATP-binding protein PstB from Moorella thermoacetica (strain ATCC 39073 / JCM 9320).